The primary structure comprises 748 residues: Proton-associated sugar transporter A (748 aa).

6 helical membrane-spanning segments follow: residues 93–113 (ILFG…PVLL), 123–143 (SLVW…LGAW), 155–175 (RPFI…LLNG), 191–211 (WGLL…DSAD), 233–253 (IHAL…GIHW), and 268–288 (VIYL…LVSI). A disordered region spans residues 294 to 339 (RPPSEKRAAMKSPSLPLPPSPPVLPEEGPGDSLPSHTATNFSSPIS). Pro residues predominate over residues 308 to 317 (LPLPPSPPVL). Thr497 is modified (phosphothreonine). 6 helical membrane passes run 533 to 553 (GWLS…EVVF), 573 to 593 (VTMG…YSAI), 600 to 620 (FLSV…GTGL), 627 to 647 (LYVV…LCTL), 685 to 705 (FLAQ…VGSA), and 708 to 728 (VMYF…LFVI).

This sequence belongs to the glycoside-pentoside-hexuronide (GPH) cation symporter transporter (TC 2.A.2) family. In terms of tissue distribution, expressed in adult heart, brain, muscle and kidney, with very strong expression in brain. Also expressed in fetal brain, kidney and lung.

The protein localises to the membrane. The enzyme catalyses D-galactose(in) + H(+)(in) = D-galactose(out) + H(+)(out). The catalysed reaction is D-glucose(out) + H(+)(out) = D-glucose(in) + H(+)(in). In terms of biological role, proton-associated glucose transporter in the brain. The protein is Proton-associated sugar transporter A of Homo sapiens (Human).